The chain runs to 360 residues: NAD(P)H-quinone oxidoreductase subunit 1, chloroplastic (360 aa).

9 consecutive transmembrane segments (helical) span residues 27-47, 98-118, 129-149, 165-185, 203-223, 248-268, 269-289, 297-317, and 340-360; these read IWIF…VLVI, FSIG…VIPF, IGIF…LMSG, AAQS…ISLL, FWGW…ISSL, YSGI…LISS, LFVT…ISIL, IFGT…FLFI, and FLLP…LFSL.

It belongs to the complex I subunit 1 family. As to quaternary structure, NDH is composed of at least 16 different subunits, 5 of which are encoded in the nucleus.

Its subcellular location is the plastid. The protein resides in the chloroplast thylakoid membrane. It carries out the reaction a plastoquinone + NADH + (n+1) H(+)(in) = a plastoquinol + NAD(+) + n H(+)(out). The catalysed reaction is a plastoquinone + NADPH + (n+1) H(+)(in) = a plastoquinol + NADP(+) + n H(+)(out). Functionally, NDH shuttles electrons from NAD(P)H:plastoquinone, via FMN and iron-sulfur (Fe-S) centers, to quinones in the photosynthetic chain and possibly in a chloroplast respiratory chain. The immediate electron acceptor for the enzyme in this species is believed to be plastoquinone. Couples the redox reaction to proton translocation, and thus conserves the redox energy in a proton gradient. The chain is NAD(P)H-quinone oxidoreductase subunit 1, chloroplastic from Olimarabidopsis pumila (Dwarf rocket).